We begin with the raw amino-acid sequence, 560 residues long: Formate--tetrahydrofolate ligase (560 aa).

Residue threonine 69 to serine 76 participates in ATP binding.

The protein belongs to the formate--tetrahydrofolate ligase family.

The enzyme catalyses (6S)-5,6,7,8-tetrahydrofolate + formate + ATP = (6R)-10-formyltetrahydrofolate + ADP + phosphate. It participates in one-carbon metabolism; tetrahydrofolate interconversion. This is Formate--tetrahydrofolate ligase from Bacillus pumilus (strain SAFR-032).